The following is a 149-amino-acid chain: Nucleoside diphosphate kinase (149 aa).

6 residues coordinate ATP: Lys9, Phe57, Arg85, Thr91, Arg102, and Asn112. His115 serves as the catalytic Pros-phosphohistidine intermediate.

Belongs to the NDK family. As to quaternary structure, homotetramer. Mg(2+) serves as cofactor.

The protein localises to the cytoplasm. The enzyme catalyses a 2'-deoxyribonucleoside 5'-diphosphate + ATP = a 2'-deoxyribonucleoside 5'-triphosphate + ADP. It carries out the reaction a ribonucleoside 5'-diphosphate + ATP = a ribonucleoside 5'-triphosphate + ADP. In terms of biological role, major role in the synthesis of nucleoside triphosphates other than ATP. The ATP gamma phosphate is transferred to the NDP beta phosphate via a ping-pong mechanism, using a phosphorylated active-site intermediate. This Desulforamulus reducens (strain ATCC BAA-1160 / DSM 100696 / MI-1) (Desulfotomaculum reducens) protein is Nucleoside diphosphate kinase.